We begin with the raw amino-acid sequence, 324 residues long: mRNA decay activator protein ZFP36 (324 aa).

The interval 1-15 is necessary for nuclear export; it reads MDLAAIYKSLLSLSP. Residues 1-98 are necessary and sufficient for the association with mRNA decay enzymes and mRNA decay activation; that stretch reads MDLAAIYKSL…PTSPTATPTT (98 aa). Necessary for localization of ARE-containing mRNAs to processing bodies (PBs) stretches follow at residues 1–172 and 98–324; these read MDLA…DLAA and TSSR…SVSE. Residues 15–46 are compositionally biased toward low complexity; it reads PELPSDLGETESSTSWASSGPWSLSSSDSSLP. The tract at residues 15–50 is disordered; it reads PELPSDLGETESSTSWASSGPWSLSSSDSSLPEVAA. Serine 58 bears the Phosphoserine; by MAPKAPK2 mark. Phosphoserine is present on serine 64. A P-P-P-P-G repeat occupies 69–73; that stretch reads PPPPG. A disordered region spans residues 76 to 100; the sequence is PLAPRPSSDWSPSPTSPTATPTTSS. 2 positions are modified to phosphoserine: serine 86 and serine 88. Phosphothreonine is present on threonine 90. Serine 91 is modified (phosphoserine). The tract at residues 93 to 166 is necessary for nuclear localization; it reads TATPTTSSRY…GSRCHFIHNP (74 aa). Residues 95 to 171 are necessary for RNA-binding; the sequence is TPTTSSRYKT…FIHNPSEDLA (77 aa). 2 C3H1-type zinc fingers span residues 101-129 and 139-167; these read RYKT…HGLG and KYKT…HNPS. The tract at residues 101-192 is necessary for interaction with PABPN1; that stretch reads RYKTELCRTF…ISFSGLPSGR (92 aa). Phosphoserine is present on serine 167. The interval 172–324 is necessary for mRNA decay activation; that stretch reads APGHPHVLRQ…PIFNRISVSE (153 aa). Phosphoserine; by MAPKAPK2 is present on serine 184. Disordered regions lie at residues 185–227 and 270–324; these read FSGL…LLLS and PSAH…SVSE. Serine 195 is modified (phosphoserine). One copy of the P-P-P-P-G repeat lies at 196-200; the sequence is PPPAS. Positions 204 to 214 are enriched in low complexity; it reads PSVSSWSFSPS. Serine 216 bears the Phosphoserine mark. One copy of the P-P-P-P-G repeat lies at 218–222; it reads PPPPG. The residue at position 227 (serine 227) is a Phosphoserine; by MAPK1; in vitro. 3 positions are modified to phosphoserine: serine 274, serine 294, and serine 321. The interaction with CNOT1 stretch occupies residues 310 to 324; that stretch reads APRRLPIFNRISVSE.

As to quaternary structure, associates with cytoplasmic CCR4-NOT and PAN2-PAN3 deadenylase complexes to trigger ARE-containing mRNA deadenylation and decay processes. Part of a mRNA decay activation complex at least composed of poly(A)-specific exoribonucleases CNOT6, EXOSC2 and XRN1 and mRNA-decapping enzymes DCP1A and DCP2. Associates with the RNA exosome complex. Interacts (via phosphorylated form) with 14-3-3 proteins; these interactions promote exclusion of ZFP36 from cytoplasmic stress granules in response to arsenite treatment in a MAPKAPK2-dependent manner and does not prevent CCR4-NOT deadenylase complex recruitment or ZFP36-induced ARE-containing mRNA deadenylation and decay processes. Interacts with 14-3-3 proteins; these interactions occur in response to rapamycin in an Akt-dependent manner. Interacts with AGO2 and AGO4. Interacts (via C-terminus) with CNOT1; this interaction occurs in a RNA-independent manner and induces mRNA deadenylation. Interacts (via N-terminus) with CNOT6. Interacts with CNOT6L. Interacts (via C-terminus) with CNOT7; this interaction occurs in a RNA-independent manner, induces mRNA deadenylation and is inhibited in a phosphorylation MAPKAPK2-dependent manner. Interacts (via unphosphorylated form) with CNOT8; this interaction occurs in a RNA-independent manner and is inhibited in a phosphorylation MAPKAPK2-dependent manner. Interacts with DCP1A. Interacts (via N-terminus) with DCP2. Interacts with EDC3. Interacts (via N-terminus) with EXOSC2. Interacts with heat shock 70 kDa proteins. Interacts with KHSRP; this interaction increases upon cytokine-induced treatment. Interacts with MAP3K4; this interaction enhances the association with SH3KBP1/CIN85. Interacts with MAPKAPK2; this interaction occurs upon skeletal muscle satellite cell activation. Interacts with NCL. Interacts with NUP214; this interaction increases upon lipopolysaccharide (LPS) stimulation. Interacts with PABPC1; this interaction occurs in a RNA-dependent manner. Interacts (via hypophosphorylated form) with PABPN1 (via RRM domain and C-terminal arginine-rich region); this interaction occurs in the nucleus in a RNA-independent manner, decreases in presence of single-stranded poly(A) RNA-oligomer and in a p38 MAPK-dependent-manner and inhibits nuclear poly(A) tail synthesis. Interacts with PAN2. Interacts (via C3H1-type zinc finger domains) with PKM. Interacts (via C3H1-type zinc finger domains) with nuclear RNA poly(A) polymerase. Interacts with PPP2CA; this interaction occurs in LPS-stimulated cells and induces ZFP36 dephosphorylation, and hence may promote ARE-containing mRNAs decay. Interacts (via C-terminus) with PRR5L (via C-terminus); this interaction may accelerate ZFP36-mediated mRNA decay during stress. Interacts (via C-terminus) with SFN; this interaction occurs in a phosphorylation-dependent manner. Interacts (via extreme C-terminal region) with SH3KBP1/CIN85 (via SH3 domains); this interaction enhances MAP3K4-induced phosphorylation of ZFP36 at Ser-64 and Ser-91 and does not alter neither ZFP36 binding to ARE-containing transcripts nor TNF-alpha mRNA decay. Interacts with XRN1. Interacts (via C-terminus and Ser-184 phosphorylated form) with YWHAB; this interaction occurs in a p38/MAPKAPK2-dependent manner, increases cytoplasmic localization of ZFP36 and protects ZFP36 from Ser-184 dephosphorylation by serine/threonine phosphatase 2A, and hence may be crucial for stabilizing ARE-containing mRNAs. Interacts (via phosphorylated form) with YWHAE. Interacts (via C-terminus) with YWHAG; this interaction occurs in a phosphorylation-dependent manner. Interacts with YWHAH; this interaction occurs in a phosphorylation-dependent manner. Interacts with YWHAQ; this interaction occurs in a phosphorylation-dependent manner. Interacts with (via C-terminus) YWHAZ; this interaction occurs in a phosphorylation-dependent manner. Does not interact with SH3KBP1. Interacts (via P-P-P-P-G repeats) with GIGYF2; the interaction is direct. Post-translationally, phosphorylated. Phosphorylation at serine and/or threonine residues occurs in a p38 MAPK- and MAPKAPK2-dependent manner. Phosphorylated by MAPKAPK2 at Ser-58 and Ser-184; phosphorylation increases its stability and cytoplasmic localization, promotes binding to 14-3-3 adapter proteins and inhibits the recruitment of cytoplasmic CCR4-NOT and PAN2-PAN3 deadenylase complexes to the mRNA decay machinery, thereby inhibiting ZFP36-induced ARE-containing mRNA deadenylation and decay processes. Phosphorylation by MAPKAPK2 does not impair ARE-containing RNA-binding. Phosphorylated in a MAPKAPK2- and p38 MAPK-dependent manner upon skeletal muscle satellite cell activation; this phosphorylation inhibits ZFP36-mediated mRNA decay activity, and hence stabilizes MYOD1 mRNA. Phosphorylated by MAPK1 upon mitogen stimulation. Phosphorylated at Ser-64 and Ser-91; these phosphorylations increase in a SH3KBP1-dependent manner. Phosphorylated at serine and threonine residues in a pyruvate kinase PKM- and p38 MAPK-dependent manner. Phosphorylation at Ser-58 may participate in the PKM-mediated degradation of ZFP36 in a p38 MAPK-dependent manner. Dephosphorylated by serine/threonine phosphatase 2A at Ser-184. In terms of processing, ubiquitinated; pyruvate kinase (PKM)-dependent ubiquitination leads to proteasomal degradation through a p38 MAPK signaling pathway.

Its subcellular location is the nucleus. It localises to the cytoplasm. The protein resides in the cytoplasmic granule. The protein localises to the P-body. In terms of biological role, zinc-finger RNA-binding protein that destabilizes numerous cytoplasmic AU-rich element (ARE)-containing mRNA transcripts by promoting their poly(A) tail removal or deadenylation, and hence provide a mechanism for attenuating protein synthesis. Acts as an 3'-untranslated region (UTR) ARE mRNA-binding adapter protein to communicate signaling events to the mRNA decay machinery. Recruits deadenylase CNOT7 (and probably the CCR4-NOT complex) via association with CNOT1, and hence promotes ARE-mediated mRNA deadenylation. Also functions by recruiting components of the cytoplasmic RNA decay machinery to the bound ARE-containing mRNAs. Self regulates by destabilizing its own mRNA. Binds to 3'-UTR ARE of numerous mRNAs. Also binds to ARE of its own mRNA. Plays a role in anti-inflammatory responses; suppresses tumor necrosis factor (TNF)-alpha production by stimulating ARE-mediated TNF-alpha mRNA decay and several other inflammatory ARE-containing mRNAs in interferon (IFN)- and/or lipopolysaccharide (LPS)-induced macrophages. Also plays a role in the regulation of dendritic cell maturation at the post-transcriptional level, and hence operates as part of a negative feedback loop to limit the inflammatory response. Promotes ARE-mediated mRNA decay of hypoxia-inducible factor HIF1A mRNA during the response of endothelial cells to hypoxia. Positively regulates early adipogenesis of preadipocytes by promoting ARE-mediated mRNA decay of immediate early genes (IEGs). Negatively regulates hematopoietic/erythroid cell differentiation by promoting ARE-mediated mRNA decay of the transcription factor STAT5B mRNA. Plays a role in maintaining skeletal muscle satellite cell quiescence by promoting ARE-mediated mRNA decay of the myogenic determination factor MYOD1 mRNA. Also associates with and regulates the expression of non-ARE-containing target mRNAs at the post-transcriptional level, such as MHC class I mRNAs. Participates in association with argonaute RISC catalytic components in the ARE-mediated mRNA decay mechanism; assists microRNA (miRNA) targeting ARE-containing mRNAs. May also play a role in the regulation of cytoplasmic mRNA decapping; enhances decapping of ARE-containing RNAs, in vitro. Involved in the delivery of target ARE-mRNAs to processing bodies (PBs). In addition to its cytosolic mRNA-decay function, affects nuclear pre-mRNA processing. Negatively regulates nuclear poly(A)-binding protein PABPN1-stimulated polyadenylation activity on ARE-containing pre-mRNA during LPS-stimulated macrophages. Also involved in the regulation of stress granule (SG) and P-body (PB) formation and fusion. Plays a role in the regulation of keratinocyte proliferation, differentiation and apoptosis. Plays a role as a tumor suppressor by inhibiting cell proliferation in breast cancer cells. The protein is mRNA decay activator protein ZFP36 of Bos taurus (Bovine).